Reading from the N-terminus, the 350-residue chain is FAD:protein FMN transferase (350 aa).

An N-terminal signal peptide occupies residues 1–19 (MKMTFCRAVCLAAAFLLMG). A lipid anchor (N-palmitoyl cysteine) is attached at Cys20. Cys20 carries S-diacylglycerol cysteine lipidation. FAD is bound by residues Met41, Tyr78, 119-121 (AMD), and Asp181. Thr184 lines the Mg(2+) pocket. Residues Glu187 and Ile272 each coordinate FAD. 3 residues coordinate Mg(2+): Asp298, Asp301, and Thr302.

It belongs to the ApbE family. Homodimer. Mg(2+) serves as cofactor.

It is found in the cell inner membrane. The enzyme catalyses L-threonyl-[protein] + FAD = FMN-L-threonyl-[protein] + AMP + H(+). Functionally, flavin transferase that catalyzes the transfer of the FMN moiety of FAD and its covalent binding to the hydroxyl group of a threonine residue in a target flavoprotein such as NqrB and NqrC, two subunits of the NQR complex. In Salmonella typhimurium (strain LT2 / SGSC1412 / ATCC 700720), this protein is FAD:protein FMN transferase.